We begin with the raw amino-acid sequence, 433 residues long: Zuotin (433 aa).

Position 50 is a phosphoserine (Ser50). Residues 98-170 enclose the J domain; sequence LYAAMGLSKL…RAQYDSCDFV (73 aa). A compositionally biased stretch (basic and acidic residues) spans 292–330; sequence EEKKEKERRKWEREAGARAEAEAKAKAEAEAKAKAESEA. Residues 292–357 are disordered; it reads EEKKEKERRK…KAAKKKNKRA (66 aa).

RAC is a heterodimer of the Hsp70/DnaK-type chaperone SSZ1 and the Hsp40/DnaJ-type chaperone ZUO1. RAC associates with ribosomes via ZUO1.

It localises to the cytoplasm. In terms of biological role, component of the ribosome-associated complex (RAC), a heterodimeric chaperone complex involved in regulation of accurate translation termination and in folding or maintaining nascent polypeptides in a folding-competent state. RAC stimulates the ATPase activity of the ribosome-associated pool of Hsp70-type chaperones SSB1/SSB2 that bind to the nascent polypeptide chain. ZUO1 can act as a J-protein for SSB1/SSB2 only when associated with SSZ1. This chain is Zuotin (ZUO1), found in Saccharomyces cerevisiae (strain ATCC 204508 / S288c) (Baker's yeast).